Here is a 347-residue protein sequence, read N- to C-terminus: 3-isopropylmalate dehydrogenase (347 aa).

Residues arginine 94, arginine 104, arginine 128, and aspartate 219 each contribute to the substrate site. Mg(2+) contacts are provided by aspartate 219, aspartate 243, and aspartate 247. 279 to 291 is a binding site for NAD(+); that stretch reads GSAPDIAGQGKAD.

It belongs to the isocitrate and isopropylmalate dehydrogenases family. LeuB type 2 subfamily. In terms of assembly, homodimer. The cofactor is Mg(2+). Mn(2+) is required as a cofactor.

It is found in the cytoplasm. The catalysed reaction is (2R,3S)-3-isopropylmalate + NAD(+) = 4-methyl-2-oxopentanoate + CO2 + NADH. It functions in the pathway amino-acid biosynthesis; L-leucine biosynthesis; L-leucine from 3-methyl-2-oxobutanoate: step 3/4. In terms of biological role, catalyzes the oxidation of 3-carboxy-2-hydroxy-4-methylpentanoate (3-isopropylmalate) to 3-carboxy-4-methyl-2-oxopentanoate. The product decarboxylates to 4-methyl-2 oxopentanoate. The protein is 3-isopropylmalate dehydrogenase of Streptomyces avermitilis (strain ATCC 31267 / DSM 46492 / JCM 5070 / NBRC 14893 / NCIMB 12804 / NRRL 8165 / MA-4680).